The following is a 77-amino-acid chain: Conotoxin VnMKLT1-012 (77 aa).

An N-terminal signal peptide occupies residues 1–22 (MKLTCMMIVAVLFLTAWTFVTA). A propeptide spanning residues 23–48 (DDSRNGLDYLFPKARHEMNPKASRDI) is cleaved from the precursor. 3 disulfides stabilise this stretch: C51–C68, C58–C72, and C67–C76.

Belongs to the conotoxin O1 superfamily. As to expression, expressed by the venom duct.

The protein resides in the secreted. In Conus ventricosus (Mediterranean cone), this protein is Conotoxin VnMKLT1-012.